Here is a 188-residue protein sequence, read N- to C-terminus: dCTP deaminase (188 aa).

Residues K111–R116, V135–E137, Q156, Y170, and Q180 each bind dCTP. Residue E137 is the Proton donor/acceptor of the active site.

It belongs to the dCTP deaminase family. As to quaternary structure, homotrimer.

It catalyses the reaction dCTP + H2O + H(+) = dUTP + NH4(+). The protein operates within pyrimidine metabolism; dUMP biosynthesis; dUMP from dCTP (dUTP route): step 1/2. In terms of biological role, catalyzes the deamination of dCTP to dUTP. This chain is dCTP deaminase, found in Protochlamydia amoebophila (strain UWE25).